We begin with the raw amino-acid sequence, 79 residues long: Acyl carrier protein (79 aa).

In terms of domain architecture, Carrier spans M1–Q76. Residue S36 is modified to O-(pantetheine 4'-phosphoryl)serine.

Belongs to the acyl carrier protein (ACP) family. In terms of processing, 4'-phosphopantetheine is transferred from CoA to a specific serine of apo-ACP by AcpS. This modification is essential for activity because fatty acids are bound in thioester linkage to the sulfhydryl of the prosthetic group.

The protein resides in the cytoplasm. Its pathway is lipid metabolism; fatty acid biosynthesis. Its function is as follows. Carrier of the growing fatty acid chain in fatty acid biosynthesis. This chain is Acyl carrier protein, found in Chlamydia pneumoniae (Chlamydophila pneumoniae).